Here is an 84-residue protein sequence, read N- to C-terminus: Small ribosomal subunit protein uS17 (84 aa).

It belongs to the universal ribosomal protein uS17 family. As to quaternary structure, part of the 30S ribosomal subunit.

In terms of biological role, one of the primary rRNA binding proteins, it binds specifically to the 5'-end of 16S ribosomal RNA. In Glaesserella parasuis serovar 5 (strain SH0165) (Haemophilus parasuis), this protein is Small ribosomal subunit protein uS17.